Reading from the N-terminus, the 109-residue chain is Fluoride-specific ion channel FluC 1 (109 aa).

4 consecutive transmembrane segments (helical) span residues 1–21 (MVIVYLAIACGFGALVRYFFS), 29–49 (LPLGTLIANLLGCFLIGVFYN), 55–75 (EVYAILATGFCGGLTTFSTLN), and 87–107 (VFYSYLILTYLGGLVAIFLGI). 2 residues coordinate Na(+): Gly-66 and Thr-69.

It belongs to the fluoride channel Fluc/FEX (TC 1.A.43) family.

The protein localises to the cell membrane. It catalyses the reaction fluoride(in) = fluoride(out). Its activity is regulated as follows. Na(+) is not transported, but it plays an essential structural role and its presence is essential for fluoride channel function. Fluoride-specific ion channel. Important for reducing fluoride concentration in the cell, thus reducing its toxicity. This chain is Fluoride-specific ion channel FluC 1, found in Streptococcus pneumoniae (strain ATCC BAA-255 / R6).